A 271-amino-acid polypeptide reads, in one-letter code: 5-deoxy-glucuronate isomerase (271 aa).

This sequence belongs to the isomerase IolB family.

The catalysed reaction is 5-deoxy-D-glucuronate = 5-dehydro-2-deoxy-D-gluconate. It participates in polyol metabolism; myo-inositol degradation into acetyl-CoA; acetyl-CoA from myo-inositol: step 4/7. Functionally, involved in the isomerization of 5-deoxy-glucuronate (5DG) to 5-dehydro-2-deoxy-D-gluconate (DKG or 2-deoxy-5-keto-D-gluconate). The chain is 5-deoxy-glucuronate isomerase from Bacillus velezensis (strain DSM 23117 / BGSC 10A6 / LMG 26770 / FZB42) (Bacillus amyloliquefaciens subsp. plantarum).